Reading from the N-terminus, the 88-residue chain is Putative membrane protein insertion efficiency factor (88 aa).

Belongs to the UPF0161 family.

The protein localises to the cell inner membrane. In terms of biological role, could be involved in insertion of integral membrane proteins into the membrane. This chain is Putative membrane protein insertion efficiency factor, found in Synechococcus sp. (strain CC9311).